A 206-amino-acid chain; its full sequence is Dephospho-CoA kinase (206 aa).

Residues 4–200 (TVALTGGIGS…ASYLKLASQF (197 aa)) form the DPCK domain. ATP is bound at residue 12–17 (GSGKST).

Belongs to the CoaE family.

The protein localises to the cytoplasm. It catalyses the reaction 3'-dephospho-CoA + ATP = ADP + CoA + H(+). It participates in cofactor biosynthesis; coenzyme A biosynthesis; CoA from (R)-pantothenate: step 5/5. In terms of biological role, catalyzes the phosphorylation of the 3'-hydroxyl group of dephosphocoenzyme A to form coenzyme A. The protein is Dephospho-CoA kinase of Salmonella typhimurium (strain LT2 / SGSC1412 / ATCC 700720).